A 118-amino-acid chain; its full sequence is Autophagy-related protein 8 (118 aa).

A lipid anchor (Phosphatidylethanolamine amidated glycine) is attached at glycine 116. Positions 117 to 118 (EA) are cleaved as a propeptide — removed in mature form.

Belongs to the ATG8 family. In terms of assembly, conjugation to phosphatidylethanolamine (PE) leads to homodimerization. Interacts with ATG1, ATG3, ATG4, ATG7 and ATG12. Post-translationally, the C-terminal Glu-117 and Ala-118 residues of ATG8 are removed by ATG4 to expose Gly-116 at the C-terminus. This Gly-116 forms then a thioester bond with the 'Cys-550' of ATG7 (E1-like activating enzyme) before being transferred to the 'Cys-244' of ATG3 (the specific E2 conjugating enzyme), in order to be finally amidated with phosphatidylethanolamine. This lipid modification anchors ATG8 to membranes and can be reversed by ATG4, releasing soluble ATG8.

The protein localises to the cytoplasmic vesicle. The protein resides in the cvt vesicle membrane. It localises to the autophagosome membrane. Its subcellular location is the vacuole membrane. Ubiquitin-like modifier involved in cytoplasm to vacuole transport (Cvt) vesicles and autophagosome formation. With ATG4, mediates the delivery of the vesicles and autophagosomes to the vacuole via the microtubule cytoskeleton. Required for selective autophagic degradation of the nucleus (nucleophagy) as well as for mitophagy which contributes to regulate mitochondrial quantity and quality by eliminating the mitochondria to a basal level to fulfill cellular energy requirements and preventing excess ROS production. Also participates in membrane fusion events that take place in the early secretory pathway. Also involved in endoplasmic reticulum-specific autophagic process and is essential for the survival of cells subjected to severe ER stress. The ATG8-PE conjugate mediates tethering between adjacent membranes and stimulates membrane hemifusion, leading to expansion of the autophagosomal membrane during autophagy. Moreover not only conjugation, but also subsequent ATG8-PE deconjugation is an important step required to facilitate multiple events during macroautophagy, and especially for efficient autophagosome biogenesis, the assembly of ATG9-containing tubulovesicular clusters into phagophores/autophagosomes, and for the disassembly of PAS-associated ATG components. Autophagy is required for proper vegetative growth, asexual/sexual reproduction, and full virulence. Autophagy is particularly involved in the biosynthesis of deoxynivalenol (DON), an important virulence determinant. This Gibberella zeae (strain ATCC MYA-4620 / CBS 123657 / FGSC 9075 / NRRL 31084 / PH-1) (Wheat head blight fungus) protein is Autophagy-related protein 8.